The sequence spans 113 residues: uncharacterized protein (113 aa).

Its subcellular location is the mitochondrion. This is an uncharacterized protein from Paramecium tetraurelia.